Reading from the N-terminus, the 572-residue chain is Urease subunit alpha (572 aa).

Residues 136 to 572 (GGIDTHIHFI…VPLGQRYFLF (437 aa)) form the Urease domain. Ni(2+) is bound by residues H141, H143, and K224. K224 is modified (N6-carboxylysine). H226 contributes to the substrate binding site. 2 residues coordinate Ni(2+): H253 and H279. The active-site Proton donor is the H327. Residue D367 participates in Ni(2+) binding.

Belongs to the metallo-dependent hydrolases superfamily. Urease alpha subunit family. In terms of assembly, heterotrimer of UreA (gamma), UreB (beta) and UreC (alpha) subunits. Three heterotrimers associate to form the active enzyme. Ni cation serves as cofactor. Post-translationally, carboxylation allows a single lysine to coordinate two nickel ions.

Its subcellular location is the cytoplasm. The enzyme catalyses urea + 2 H2O + H(+) = hydrogencarbonate + 2 NH4(+). The protein operates within nitrogen metabolism; urea degradation; CO(2) and NH(3) from urea (urease route): step 1/1. The polypeptide is Urease subunit alpha (Haemophilus influenzae (strain 86-028NP)).